Consider the following 62-residue polypeptide: Snaclec aspercetin subunit beta (62 aa).

A disulfide bridge connects residues C2 and C13. The region spanning 9-62 (YEGHCYRVFKPPKDWADAERFCSQQAKGGHLVSIERFGREDFVSNLITKNLQRG) is the C-type lectin domain.

The protein belongs to the snaclec family. As to quaternary structure, heterodimer; disulfide-linked. As to expression, expressed by the venom gland.

It localises to the secreted. Its function is as follows. Snaclec that binds to von Willebrand factor (VWF) and induces its interaction with GPIbalpha (GP1BA) (via the vWF A1 domain), resulting in platelet aggregation. Intramuscular and intravenous injections in mice induce a dose-dependent drop in platelet count (thrombocytopenia). Pretreatment by intravenous injection by this protein in mice potentiates the hemorrhagic lesion in the skin provoked by the metalloproteinase BaP1 intradermally injected. This result is not observed when both BaP1 and this protein are injected simultaneously. This Bothrops asper (Terciopelo) protein is Snaclec aspercetin subunit beta.